The primary structure comprises 295 residues: Ent-pimara-9(11),15-diene synthase (295 aa).

It belongs to the terpene synthase family. As to quaternary structure, monomer. Requires a divalent metal cation as cofactor.

It carries out the reaction ent-copalyl diphosphate = ent-pimara-9(11),15-diene + diphosphate. Its pathway is antibiotic biosynthesis. Its function is as follows. Involved in viguiepinol biosynthesis. Catalyzes the conversion of copalyl diphosphate (ent-CDP) into pimara-9(11),15-diene (PMD). The sequence is that of Ent-pimara-9(11),15-diene synthase from Streptomyces sp. (strain KO-3988).